The chain runs to 123 residues: uncharacterized protein (123 aa).

The next 2 helical transmembrane spans lie at 55-77 and 92-114; these read LLIH…STIL and FFIN…TIVY.

The protein localises to the cell membrane. This is an uncharacterized protein from Pasteurella multocida (strain Pm70).